An 80-amino-acid chain; its full sequence is Translation initiation factor IF-1 (80 aa).

One can recognise an S1-like domain in the interval 6–80 (EKRKKEESDV…TSRGRIVYRK (75 aa)).

This sequence belongs to the IF-1 family. Component of the 30S ribosomal translation pre-initiation complex which assembles on the 30S ribosome in the order IF-2 and IF-3, IF-1 and N-formylmethionyl-tRNA(fMet); mRNA recruitment can occur at any time during PIC assembly.

It is found in the cytoplasm. Its function is as follows. One of the essential components for the initiation of protein synthesis. Stabilizes the binding of IF-2 and IF-3 on the 30S subunit to which N-formylmethionyl-tRNA(fMet) subsequently binds. Helps modulate mRNA selection, yielding the 30S pre-initiation complex (PIC). Upon addition of the 50S ribosomal subunit IF-1, IF-2 and IF-3 are released leaving the mature 70S translation initiation complex. The polypeptide is Translation initiation factor IF-1 (Deinococcus geothermalis (strain DSM 11300 / CIP 105573 / AG-3a)).